The sequence spans 356 residues: A-type ATP synthase subunit C (356 aa).

This sequence belongs to the V-ATPase V0D/AC39 subunit family. In terms of assembly, has multiple subunits with at least A(3), B(3), C, D, E, F, H, I and proteolipid K(x).

The protein resides in the cell membrane. Component of the A-type ATP synthase that produces ATP from ADP in the presence of a proton gradient across the membrane. The polypeptide is A-type ATP synthase subunit C (Thermoplasma volcanium (strain ATCC 51530 / DSM 4299 / JCM 9571 / NBRC 15438 / GSS1)).